Here is a 160-residue protein sequence, read N- to C-terminus: Ribosomal RNA large subunit methyltransferase H (160 aa).

Residues Leu76 and Gly108 each coordinate S-adenosyl-L-methionine.

Belongs to the RNA methyltransferase RlmH family. Homodimer.

The protein localises to the cytoplasm. It catalyses the reaction pseudouridine(1915) in 23S rRNA + S-adenosyl-L-methionine = N(3)-methylpseudouridine(1915) in 23S rRNA + S-adenosyl-L-homocysteine + H(+). In terms of biological role, specifically methylates the pseudouridine at position 1915 (m3Psi1915) in 23S rRNA. This is Ribosomal RNA large subunit methyltransferase H from Nitrobacter hamburgensis (strain DSM 10229 / NCIMB 13809 / X14).